The chain runs to 84 residues: Small ribosomal subunit protein uS17 (84 aa).

The protein belongs to the universal ribosomal protein uS17 family. In terms of assembly, part of the 30S ribosomal subunit.

Its function is as follows. One of the primary rRNA binding proteins, it binds specifically to the 5'-end of 16S ribosomal RNA. This is Small ribosomal subunit protein uS17 from Serratia proteamaculans (strain 568).